Consider the following 953-residue polypeptide: Translation initiation factor IF-2 (953 aa).

Disordered stretches follow at residues 52–247 and 279–363; these read KASK…LAEL and TKLK…TERK. 3 stretches are compositionally biased toward basic and acidic residues: residues 80–89, 98–111, and 140–188; these read TGSEHVEKTQ, FKAE…EQAA, and QGDK…ENHK. Positions 191-207 are enriched in polar residues; sequence RFTNQKKQGRQEPQSKS. Residues 229–247 show a composition bias toward basic and acidic residues; the sequence is RQSETRFRAQQEAKRLAEL. Residues 282 to 291 show a composition bias toward polar residues; sequence KSSNISAKST. A compositionally biased stretch (basic and acidic residues) spans 300 to 317; sequence ARPEKNRELTHHSQEGQK. Low complexity predominate over residues 322 to 338; it reads SWNSQNQVRNQKNSNWN. Residues 339-348 are compositionally biased toward basic residues; it reads KNKKTKKGKN. A tr-type G domain is found at 454–623; sequence ERAPVVTIMG…LLVAEVEELK (170 aa). Positions 463–470 are G1; that stretch reads GHVDHGKT. 463-470 provides a ligand contact to GTP; sequence GHVDHGKT. The interval 488–492 is G2; it reads GITQH. The segment at 509–512 is G3; the sequence is DTPG. GTP-binding positions include 509–513 and 563–566; these read DTPGH and NKID. Residues 563–566 form a G4 region; that stretch reads NKID. Residues 599 to 601 form a G5 region; sequence SAK.

The protein belongs to the TRAFAC class translation factor GTPase superfamily. Classic translation factor GTPase family. IF-2 subfamily.

The protein localises to the cytoplasm. In terms of biological role, one of the essential components for the initiation of protein synthesis. Protects formylmethionyl-tRNA from spontaneous hydrolysis and promotes its binding to the 30S ribosomal subunits. Also involved in the hydrolysis of GTP during the formation of the 70S ribosomal complex. This chain is Translation initiation factor IF-2, found in Streptococcus pyogenes serotype M5 (strain Manfredo).